The primary structure comprises 458 residues: Light-independent protochlorophyllide reductase subunit N (458 aa).

[4Fe-4S] cluster-binding residues include cysteine 20, cysteine 45, and cysteine 105.

The protein belongs to the BchN/ChlN family. As to quaternary structure, protochlorophyllide reductase is composed of three subunits; ChlL, ChlN and ChlB. Forms a heterotetramer of two ChlB and two ChlN subunits. It depends on [4Fe-4S] cluster as a cofactor.

It localises to the plastid. Its subcellular location is the chloroplast. The enzyme catalyses chlorophyllide a + oxidized 2[4Fe-4S]-[ferredoxin] + 2 ADP + 2 phosphate = protochlorophyllide a + reduced 2[4Fe-4S]-[ferredoxin] + 2 ATP + 2 H2O. It participates in porphyrin-containing compound metabolism; chlorophyll biosynthesis (light-independent). In terms of biological role, component of the dark-operative protochlorophyllide reductase (DPOR) that uses Mg-ATP and reduced ferredoxin to reduce ring D of protochlorophyllide (Pchlide) to form chlorophyllide a (Chlide). This reaction is light-independent. The NB-protein (ChlN-ChlB) is the catalytic component of the complex. This chain is Light-independent protochlorophyllide reductase subunit N, found in Angiopteris evecta (Mule's foot fern).